The chain runs to 159 residues: Transcriptional repressor NrdR (159 aa).

The segment at 3–34 (CPFCNAADSKVIDSRLAAEGCQIRRRRECISC) is a zinc-finger region. The region spanning 49-139 (PRVIKSNGKN…VYQDFQDVEA (91 aa)) is the ATP-cone domain.

This sequence belongs to the NrdR family. Zn(2+) serves as cofactor.

In terms of biological role, negatively regulates transcription of bacterial ribonucleotide reductase nrd genes and operons by binding to NrdR-boxes. The sequence is that of Transcriptional repressor NrdR from Acinetobacter baylyi (strain ATCC 33305 / BD413 / ADP1).